Reading from the N-terminus, the 317-residue chain is WSCD family member CG9164 (317 aa).

A helical membrane pass occupies residues 8 to 28; sequence FFGVSATIIIYIGGVLFLSMN. Asparagine 151, asparagine 227, and asparagine 233 each carry an N-linked (GlcNAc...) asparagine glycan.

The protein belongs to the WSCD family.

It is found in the membrane. The polypeptide is WSCD family member CG9164 (Drosophila melanogaster (Fruit fly)).